The primary structure comprises 404 residues: Cytoplasmic tRNA 2-thiolation protein 2 (404 aa).

The protein belongs to the CTU2/NCS2 family.

Its subcellular location is the cytoplasm. It functions in the pathway tRNA modification; 5-methoxycarbonylmethyl-2-thiouridine-tRNA biosynthesis. Plays a central role in 2-thiolation of mcm(5)S(2)U at tRNA wobble positions of tRNA(Lys), tRNA(Glu) and tRNA(Gln). May act by forming a heterodimer with NCS6/CTU1 that ligates sulfur from thiocarboxylated URM1 onto the uridine of tRNAs at wobble position. The protein is Cytoplasmic tRNA 2-thiolation protein 2 of Drosophila mojavensis (Fruit fly).